Consider the following 141-residue polypeptide: Large ribosomal subunit protein uL11 (141 aa).

The protein belongs to the universal ribosomal protein uL11 family. In terms of assembly, part of the ribosomal stalk of the 50S ribosomal subunit. Interacts with L10 and the large rRNA to form the base of the stalk. L10 forms an elongated spine to which L12 dimers bind in a sequential fashion forming a multimeric L10(L12)X complex. In terms of processing, one or more lysine residues are methylated.

Functionally, forms part of the ribosomal stalk which helps the ribosome interact with GTP-bound translation factors. The polypeptide is Large ribosomal subunit protein uL11 (Synechococcus sp. (strain CC9605)).